A 61-amino-acid polypeptide reads, in one-letter code: Small ribosomal subunit protein uS14 (61 aa).

Zn(2+)-binding residues include C24, C27, C40, and C43.

It belongs to the universal ribosomal protein uS14 family. Zinc-binding uS14 subfamily. In terms of assembly, part of the 30S ribosomal subunit. Contacts proteins S3 and S10. Zn(2+) is required as a cofactor.

Binds 16S rRNA, required for the assembly of 30S particles and may also be responsible for determining the conformation of the 16S rRNA at the A site. This is Small ribosomal subunit protein uS14 from Mesomycoplasma hyopneumoniae (strain 232) (Mycoplasma hyopneumoniae).